A 185-amino-acid chain; its full sequence is Putative tyrosine-protein phosphatase OCA1 (185 aa).

One can recognise a Tyrosine-protein phosphatase domain in the interval 18–178 (NFCPVEKQLY…TVEIGSGKGS (161 aa)). C116 serves as the catalytic Phosphocysteine intermediate.

Belongs to the protein-tyrosine phosphatase family.

The protein localises to the cytoplasm. The enzyme catalyses O-phospho-L-tyrosyl-[protein] + H2O = L-tyrosyl-[protein] + phosphate. Putative tyrosine-protein phosphatase required for protection against superoxide stress. This is Putative tyrosine-protein phosphatase OCA1 (OCA1) from Meyerozyma guilliermondii (strain ATCC 6260 / CBS 566 / DSM 6381 / JCM 1539 / NBRC 10279 / NRRL Y-324) (Yeast).